The following is a 359-amino-acid chain: 4-hydroxy-3-methylbut-2-en-1-yl diphosphate synthase (flavodoxin) (359 aa).

[4Fe-4S] cluster-binding residues include C264, C267, C299, and E306.

The protein belongs to the IspG family. [4Fe-4S] cluster is required as a cofactor.

The catalysed reaction is (2E)-4-hydroxy-3-methylbut-2-enyl diphosphate + oxidized [flavodoxin] + H2O + 2 H(+) = 2-C-methyl-D-erythritol 2,4-cyclic diphosphate + reduced [flavodoxin]. It functions in the pathway isoprenoid biosynthesis; isopentenyl diphosphate biosynthesis via DXP pathway; isopentenyl diphosphate from 1-deoxy-D-xylulose 5-phosphate: step 5/6. Converts 2C-methyl-D-erythritol 2,4-cyclodiphosphate (ME-2,4cPP) into 1-hydroxy-2-methyl-2-(E)-butenyl 4-diphosphate. The protein is 4-hydroxy-3-methylbut-2-en-1-yl diphosphate synthase (flavodoxin) of Helicobacter pylori (strain Shi470).